The primary structure comprises 112 residues: MLLFCYCLLLGTRIGTRIGTRIFIVHPIISPLIAVETAKKKKHIKWRFLDYSLLKNPLYVTVHGSHRSEVERARKRIKYITCTRREFLPRVPISFYQRFFSVFCRNYPSFLL.

This is an uncharacterized protein from Saccharomyces cerevisiae (strain ATCC 204508 / S288c) (Baker's yeast).